The sequence spans 273 residues: Elongation factor Ts (273 aa).

An involved in Mg(2+) ion dislocation from EF-Tu region spans residues 80-83 (TDFV).

It belongs to the EF-Ts family.

The protein localises to the cytoplasm. In terms of biological role, associates with the EF-Tu.GDP complex and induces the exchange of GDP to GTP. It remains bound to the aminoacyl-tRNA.EF-Tu.GTP complex up to the GTP hydrolysis stage on the ribosome. This is Elongation factor Ts from Tropheryma whipplei (strain Twist) (Whipple's bacillus).